Reading from the N-terminus, the 356-residue chain is Stomatin-like protein 2, mitochondrial (356 aa).

The N-terminal 28 residues, 1-28 (MLARAARGTGALLLRGSLLASGRAPRRA), are a transit peptide targeting the mitochondrion. Position 17 is a phosphoserine; by PKC/PRKCZ (Ser17). Tyr124 is subject to Phosphotyrosine. Position 145 is an N6-acetyllysine; alternate (Lys145). Lys145 is subject to N6-succinyllysine; alternate. A coiled-coil region spans residues 215 to 252 (INVAEGKKQAQILASEAEKAEQINQAAGEASAVLAKAK). Lys233 carries the N6-acetyllysine modification. The interval 321-356 (KAPVPGTPDSLSSGSSRDVQGTDASLDEELDRVKMS) is disordered. Position 327 is a phosphothreonine (Thr327). Polar residues predominate over residues 329-343 (DSLSSGSSRDVQGTD). Ser330 carries the post-translational modification Phosphoserine.

It belongs to the band 7/mec-2 family. As to quaternary structure, forms homooligomers. Interacts with MFN2; may form heterooligomers. Interacts with CACNA2D2. Interacts with PHB1 and PHB2; recruits them to cardiolipin-enriched mitochondrial membranes and stabilizes them. Post-translationally, hyperphosphorylated at Ser-17 in some patients with monoclonal gammopathy of undetermined significance (MGUS), multiple myeloma (MM) and Waldenstrom macroglobulinemia due to impaired dephosphorylation by PP2A. In terms of tissue distribution, ubiquitously expressed at low levels. Expressed in lymphoid tissues (at protein level).

Its subcellular location is the cell membrane. The protein localises to the mitochondrion. The protein resides in the mitochondrion inner membrane. It is found in the mitochondrion intermembrane space. It localises to the membrane raft. Its subcellular location is the cytoplasm. The protein localises to the cytoskeleton. In terms of biological role, mitochondrial protein that probably regulates the biogenesis and the activity of mitochondria. Stimulates cardiolipin biosynthesis, binds cardiolipin-enriched membranes where it recruits and stabilizes some proteins including prohibitin and may therefore act in the organization of functional microdomains in mitochondrial membranes. Through regulation of the mitochondrial function may play a role into several biological processes including cell migration, cell proliferation, T-cell activation, calcium homeostasis and cellular response to stress. May play a role in calcium homeostasis through negative regulation of calcium efflux from mitochondria. Required for mitochondrial hyperfusion a pro-survival cellular response to stress which results in increased ATP production by mitochondria. May also regulate the organization of functional domains at the plasma membrane and play a role in T-cell activation through association with the T-cell receptor signaling complex and its regulation. The polypeptide is Stomatin-like protein 2, mitochondrial (STOML2) (Homo sapiens (Human)).